Consider the following 306-residue polypeptide: Dermonecrotic toxin LiSicTox-alphaIA2ai (306 aa).

The first 18 residues, methionine 1–alanine 18, serve as a signal peptide directing secretion. Residues alanine 19–arginine 26 constitute a propeptide that is removed on maturation. Histidine 38 is a catalytic residue. Positions 58 and 60 each coordinate Mg(2+). The active-site Nucleophile is histidine 74. 2 disulfides stabilise this stretch: cysteine 78/cysteine 84 and cysteine 80/cysteine 223. Residue aspartate 118 participates in Mg(2+) binding. An N-linked (GlcNAc...) asparagine glycan is attached at asparagine 283.

The protein belongs to the arthropod phospholipase D family. Class II subfamily. Class IIa sub-subfamily. The cofactor is Mg(2+). As to expression, expressed by the venom gland.

The protein localises to the secreted. The catalysed reaction is an N-(acyl)-sphingosylphosphocholine = an N-(acyl)-sphingosyl-1,3-cyclic phosphate + choline. The enzyme catalyses an N-(acyl)-sphingosylphosphoethanolamine = an N-(acyl)-sphingosyl-1,3-cyclic phosphate + ethanolamine. It catalyses the reaction a 1-acyl-sn-glycero-3-phosphocholine = a 1-acyl-sn-glycero-2,3-cyclic phosphate + choline. It carries out the reaction a 1-acyl-sn-glycero-3-phosphoethanolamine = a 1-acyl-sn-glycero-2,3-cyclic phosphate + ethanolamine. Its function is as follows. Dermonecrotic toxins cleave the phosphodiester linkage between the phosphate and headgroup of certain phospholipids (sphingolipid and lysolipid substrates), forming an alcohol (often choline) and a cyclic phosphate. This toxin acts on sphingomyelin (SM). It may also act on ceramide phosphoethanolamine (CPE), lysophosphatidylcholine (LPC) and lysophosphatidylethanolamine (LPE), but not on lysophosphatidylserine (LPS), and lysophosphatidylglycerol (LPG). It acts by transphosphatidylation, releasing exclusively cyclic phosphate products as second products. It induces complement-dependent hemolysis, dermonecrosis, vascular permeability and platelet aggregation. The sequence is that of Dermonecrotic toxin LiSicTox-alphaIA2ai from Loxosceles intermedia (Brown spider).